The primary structure comprises 399 residues: 4-hydroxy-3-methylbut-2-enyl diphosphate reductase (399 aa).

Cys-66 is a binding site for [4Fe-4S] cluster. Residue His-96 coordinates (2E)-4-hydroxy-3-methylbut-2-enyl diphosphate. His-96 provides a ligand contact to dimethylallyl diphosphate. An isopentenyl diphosphate-binding site is contributed by His-96. [4Fe-4S] cluster is bound at residue Cys-157. A (2E)-4-hydroxy-3-methylbut-2-enyl diphosphate-binding site is contributed by His-185. His-185 serves as a coordination point for dimethylallyl diphosphate. His-185 is an isopentenyl diphosphate binding site. Glu-187 acts as the Proton donor in catalysis. Thr-250 is a (2E)-4-hydroxy-3-methylbut-2-enyl diphosphate binding site. Cys-288 provides a ligand contact to [4Fe-4S] cluster. Residues Ser-317, Ser-318, Asn-319, and Ser-379 each coordinate (2E)-4-hydroxy-3-methylbut-2-enyl diphosphate. Dimethylallyl diphosphate contacts are provided by Ser-317, Ser-318, Asn-319, and Ser-379. The isopentenyl diphosphate site is built by Ser-317, Ser-318, Asn-319, and Ser-379.

The protein belongs to the IspH family. It depends on [4Fe-4S] cluster as a cofactor.

It carries out the reaction isopentenyl diphosphate + 2 oxidized [2Fe-2S]-[ferredoxin] + H2O = (2E)-4-hydroxy-3-methylbut-2-enyl diphosphate + 2 reduced [2Fe-2S]-[ferredoxin] + 2 H(+). The enzyme catalyses dimethylallyl diphosphate + 2 oxidized [2Fe-2S]-[ferredoxin] + H2O = (2E)-4-hydroxy-3-methylbut-2-enyl diphosphate + 2 reduced [2Fe-2S]-[ferredoxin] + 2 H(+). Its pathway is isoprenoid biosynthesis; dimethylallyl diphosphate biosynthesis; dimethylallyl diphosphate from (2E)-4-hydroxy-3-methylbutenyl diphosphate: step 1/1. It participates in isoprenoid biosynthesis; isopentenyl diphosphate biosynthesis via DXP pathway; isopentenyl diphosphate from 1-deoxy-D-xylulose 5-phosphate: step 6/6. Functionally, catalyzes the conversion of 1-hydroxy-2-methyl-2-(E)-butenyl 4-diphosphate (HMBPP) into a mixture of isopentenyl diphosphate (IPP) and dimethylallyl diphosphate (DMAPP). Acts in the terminal step of the DOXP/MEP pathway for isoprenoid precursor biosynthesis. This Synechococcus sp. (strain WH7803) protein is 4-hydroxy-3-methylbut-2-enyl diphosphate reductase.